The chain runs to 321 residues: Lipoyl synthase (321 aa).

Positions 68, 73, 79, 94, 98, 101, and 308 each coordinate [4Fe-4S] cluster. The region spanning 80 to 297 (FNHGTATFMI…KQEALAMGFT (218 aa)) is the Radical SAM core domain.

Belongs to the radical SAM superfamily. Lipoyl synthase family. [4Fe-4S] cluster is required as a cofactor.

It localises to the cytoplasm. The catalysed reaction is [[Fe-S] cluster scaffold protein carrying a second [4Fe-4S](2+) cluster] + N(6)-octanoyl-L-lysyl-[protein] + 2 oxidized [2Fe-2S]-[ferredoxin] + 2 S-adenosyl-L-methionine + 4 H(+) = [[Fe-S] cluster scaffold protein] + N(6)-[(R)-dihydrolipoyl]-L-lysyl-[protein] + 4 Fe(3+) + 2 hydrogen sulfide + 2 5'-deoxyadenosine + 2 L-methionine + 2 reduced [2Fe-2S]-[ferredoxin]. It participates in protein modification; protein lipoylation via endogenous pathway; protein N(6)-(lipoyl)lysine from octanoyl-[acyl-carrier-protein]: step 2/2. Catalyzes the radical-mediated insertion of two sulfur atoms into the C-6 and C-8 positions of the octanoyl moiety bound to the lipoyl domains of lipoate-dependent enzymes, thereby converting the octanoylated domains into lipoylated derivatives. This chain is Lipoyl synthase, found in Sodalis glossinidius (strain morsitans).